Consider the following 881-residue polypeptide: Sodium/sulfate cotransporter 1 (881 aa).

Helical transmembrane passes span 8-28 (GIVA…DWVG), 31-51 (ITFT…VTVA), 61-81 (GLLT…TGGL), 107-127 (MVLS…PILI), 140-160 (LLIP…IGTS), and 186-206 (IFDI…FILL). RCK C-terminal domains follow at residues 212 to 296 (LPGN…EYGL), 318 to 402 (VFSA…IKTN), 407 to 492 (LHAV…FPGL), and 498 to 584 (EQVD…DKSF). 6 helical membrane passes run 601-621 (MIIG…GGLK), 625-645 (YIHL…TGCM), 658-678 (VYLT…TGVA), 684-704 (AIIS…AIYI), 775-795 (FAIV…FILV), and 803-823 (VWIV…LYFL). The interval 854 to 881 (SLRRQVSHTRTDDSGSSGSPLPAPKIVA) is disordered.

This sequence belongs to the divalent anion:Na+ symporter (DASS) superfamily. Na+/sulfate symporter (TC 2.A.47.4) family.

The protein resides in the cell membrane. Its function is as follows. Na(+)/sulfate cotransporter with a probable high-affinity for sulfate and a proteasome dependent turnover. The protein is Sodium/sulfate cotransporter 1 (SLT1) of Chlamydomonas reinhardtii (Chlamydomonas smithii).